A 420-amino-acid chain; its full sequence is UDP-N-acetylglucosamine 1-carboxyvinyltransferase (420 aa).

22–23 (KN) is a phosphoenolpyruvate binding site. R91 is a binding site for UDP-N-acetyl-alpha-D-glucosamine. C115 serves as the catalytic Proton donor. Residue C115 is modified to 2-(S-cysteinyl)pyruvic acid O-phosphothioketal. UDP-N-acetyl-alpha-D-glucosamine is bound by residues 120–124 (RPVDL), 160–163 (KVSV), D305, and I327.

This sequence belongs to the EPSP synthase family. MurA subfamily.

The protein resides in the cytoplasm. The catalysed reaction is phosphoenolpyruvate + UDP-N-acetyl-alpha-D-glucosamine = UDP-N-acetyl-3-O-(1-carboxyvinyl)-alpha-D-glucosamine + phosphate. The protein operates within cell wall biogenesis; peptidoglycan biosynthesis. In terms of biological role, cell wall formation. Adds enolpyruvyl to UDP-N-acetylglucosamine. This is UDP-N-acetylglucosamine 1-carboxyvinyltransferase from Pectobacterium atrosepticum (strain SCRI 1043 / ATCC BAA-672) (Erwinia carotovora subsp. atroseptica).